Consider the following 329-residue polypeptide: Tetraacyldisaccharide 4'-kinase (329 aa).

Position 57–64 (T57–T64) interacts with ATP.

It belongs to the LpxK family.

The catalysed reaction is a lipid A disaccharide + ATP = a lipid IVA + ADP + H(+). Its pathway is glycolipid biosynthesis; lipid IV(A) biosynthesis; lipid IV(A) from (3R)-3-hydroxytetradecanoyl-[acyl-carrier-protein] and UDP-N-acetyl-alpha-D-glucosamine: step 6/6. Its function is as follows. Transfers the gamma-phosphate of ATP to the 4'-position of a tetraacyldisaccharide 1-phosphate intermediate (termed DS-1-P) to form tetraacyldisaccharide 1,4'-bis-phosphate (lipid IVA). This is Tetraacyldisaccharide 4'-kinase from Thiobacillus denitrificans (strain ATCC 25259 / T1).